Consider the following 639-residue polypeptide: Threonine--tRNA ligase (639 aa).

One can recognise a TGS domain in the interval 1–61 (MINITLKDGK…KEDSELEILT (61 aa)). Residues 242–532 (DHRKLGKELD…LIEHFAGAFP (291 aa)) are catalytic. Cys333, His384, and His509 together coordinate Zn(2+).

Belongs to the class-II aminoacyl-tRNA synthetase family. Homodimer. Zn(2+) serves as cofactor.

It localises to the cytoplasm. It catalyses the reaction tRNA(Thr) + L-threonine + ATP = L-threonyl-tRNA(Thr) + AMP + diphosphate + H(+). In terms of biological role, catalyzes the attachment of threonine to tRNA(Thr) in a two-step reaction: L-threonine is first activated by ATP to form Thr-AMP and then transferred to the acceptor end of tRNA(Thr). Also edits incorrectly charged L-seryl-tRNA(Thr). The protein is Threonine--tRNA ligase of Clostridium tetani (strain Massachusetts / E88).